The chain runs to 186 residues: Elongation factor P (186 aa).

It belongs to the elongation factor P family.

The protein localises to the cytoplasm. It participates in protein biosynthesis; polypeptide chain elongation. Involved in peptide bond synthesis. Stimulates efficient translation and peptide-bond synthesis on native or reconstituted 70S ribosomes in vitro. Probably functions indirectly by altering the affinity of the ribosome for aminoacyl-tRNA, thus increasing their reactivity as acceptors for peptidyl transferase. The protein is Elongation factor P of Shewanella denitrificans (strain OS217 / ATCC BAA-1090 / DSM 15013).